The chain runs to 418 residues: Hydroxysqualene dehydroxylase (418 aa).

The protein belongs to the HpnE family.

It carries out the reaction squalene + FAD + H2O + H(+) = hydroxysqualene + FADH2. It participates in secondary metabolite biosynthesis; hopanoid biosynthesis. In terms of biological role, involved in the biosynthesis of the hopanoid precursor squalene (SQ) from farnesyl diphosphate (FPP). Catalyzes the third (last) step, the reduction of hydroxysqualene (HSQ) to SQ. This Rhodopseudomonas palustris (strain ATCC BAA-98 / CGA009) protein is Hydroxysqualene dehydroxylase.